The sequence spans 515 residues: Maturase K (515 aa).

It belongs to the intron maturase 2 family. MatK subfamily.

The protein resides in the plastid. It is found in the chloroplast. In terms of biological role, usually encoded in the trnK tRNA gene intron. Probably assists in splicing its own and other chloroplast group II introns. The protein is Maturase K of Pinus pinea (Italian stone pine).